The sequence spans 269 residues: Histidinol-phosphatase (269 aa).

This sequence belongs to the PHP hydrolase family. HisK subfamily.

It catalyses the reaction L-histidinol phosphate + H2O = L-histidinol + phosphate. The protein operates within amino-acid biosynthesis; L-histidine biosynthesis; L-histidine from 5-phospho-alpha-D-ribose 1-diphosphate: step 8/9. The protein is Histidinol-phosphatase (hisK) of Lactococcus lactis subsp. lactis (strain IL1403) (Streptococcus lactis).